We begin with the raw amino-acid sequence, 159 residues long: U-actitoxin-Avd13b (159 aa).

Residues 1–18 (MKSIFLVFFAVCLVKAEA) form the signal peptide. Positions 19–26 (GKGRKREP) are excised as a propeptide. 2 disulfide bridges follow: cysteine 33-cysteine 45 and cysteine 36-cysteine 52. Residues 59-60 (EP) constitute a propeptide that is removed on maturation. 2 cysteine pairs are disulfide-bonded: cysteine 67–cysteine 79 and cysteine 70–cysteine 86. Residues 93–94 (EP) constitute a propeptide that is removed on maturation. Cystine bridges form between cysteine 101-cysteine 113 and cysteine 104-cysteine 120. Positions 127–128 (EP) are excised as a propeptide. 2 cysteine pairs are disulfide-bonded: cysteine 135–cysteine 147 and cysteine 138–cysteine 154.

Belongs to the sea anemone BBH family.

Its subcellular location is the secreted. It localises to the nematocyst. Functionally, inhibits ion channels. The sequence is that of U-actitoxin-Avd13b from Anemonia viridis (Snakelocks anemone).